Reading from the N-terminus, the 653-residue chain is J protein JJJ2 (653 aa).

The region spanning 14-78 (TLYSVLNLKY…KEKMKYDSKL (65 aa)) is the J domain. Disordered stretches follow at residues 85-308 (DYSP…SSTE) and 490-512 (VSPKPRSVPSKTTPGSSHAEENL). 2 stretches are compositionally biased toward polar residues: residues 161–171 (NAKSYQNSKKS) and 187–200 (ATSFSNENRNSSSV). Over residues 213–241 (SGSAVGSESRISSSGSESSSNVNSATGSS) the composition is skewed to low complexity. A compositionally biased stretch (polar residues) spans 298-308 (PVKTTPNSSTE).

Its subcellular location is the cytoplasm. The protein localises to the nucleus. The polypeptide is J protein JJJ2 (JJJ2) (Kluyveromyces lactis (strain ATCC 8585 / CBS 2359 / DSM 70799 / NBRC 1267 / NRRL Y-1140 / WM37) (Yeast)).